The primary structure comprises 331 residues: Polysaccharide lyase (331 aa).

Positions 1–22 (MSLPLRLALLPTLLASASAFAA) are cleaved as a signal peptide. Cys23 carries N-palmitoyl cysteine lipidation. The S-diacylglycerol cysteine moiety is linked to residue Cys23.

The protein belongs to the polysaccharide lyase 5 family.

It is found in the cell outer membrane. The enzyme catalyses Eliminative cleavage of alginate to give oligosaccharides with 4-deoxy-alpha-L-erythro-hex-4-enuronosyl groups at their non-reducing ends and beta-D-mannuronate at their reducing end.. It carries out the reaction [hyaluronan](n) = n 3-(4-deoxy-beta-D-gluc-4-enuronosyl)-N-acetyl-D-glucosamine + H2O. The catalysed reaction is Eliminative cleavage of (1-&gt;4)-beta-D-glucuronans to give oligosaccharides with 4-deoxy-beta-D-gluc-4-enuronosyl groups at their non-reducing ends. Complete degradation of glucuronans results in the formation of tetrasaccharides.. With respect to regulation, is inhibited by mono- and divalent cations as well as L-ascorbic acid 6-hexadecanoate. Functionally, polysaccharide lyase that catalyzes the depolymerization of several anionic polysaccharides via a beta-elimination mechanism. Exhibits broad substrate specificity, catalyzing the degradation of not only alginate and poly-beta-D-mannuronate (poly-ManA), but poly-beta-D-glucuronate (poly-GlcA or poly-GlcUA) and hyaluronate (HA) as well. The oligosaccharide products formed by enzymatic cleavage are comprised mainly of disaccharides, with a lower abundance of trimers and pentamers. Is not active on poly-D-galacturonate, heparin and heparin sulfate. This is Polysaccharide lyase from Stenotrophomonas maltophilia (strain K279a).